A 76-amino-acid chain; its full sequence is Large ribosomal subunit protein eL20 (76 aa).

This sequence belongs to the eukaryotic ribosomal protein eL20 family. As to quaternary structure, part of the 50S ribosomal subunit. Binds 23S rRNA.

This Methanococcus maripaludis (strain C5 / ATCC BAA-1333) protein is Large ribosomal subunit protein eL20.